Reading from the N-terminus, the 1186-residue chain is Tricalbin-1 (1186 aa).

Residues 1–50 form a disordered region; sequence MAKEDTGVTAPKKPETAQVANINGIDKLEPPKTKEETESSKSVSSEKAAH. The Cytoplasmic portion of the chain corresponds to 1 to 106; sequence MAKEDTGVTA…NIIPDSLYGD (106 aa). Basic and acidic residues predominate over residues 26–39; that stretch reads DKLEPPKTKEETES. The chain crosses the membrane as a helical span at residues 107–127; that stretch reads WYHSVAIFFIGGVASFALGHY. Position 128 (lysine 128) is a topological domain, extracellular. The chain crosses the membrane as a helical span at residues 129–149; that stretch reads FSMGSAFFVIVITSLLYRTSA. The Cytoplasmic portion of the chain corresponds to 150–1186; it reads KKYRGSIREL…HEMGEEETKF (1037 aa). Positions 172–375 constitute an SMP-LTD domain; sequence DYESLEWLNA…PPFSLQLNIP (204 aa). 3 consecutive C2 domains span residues 366–487, 512–636, and 640–757; these read PPFS…RNLK, EKKL…IKIT, and RPVR…DKYE. Residues 795–822 adopt a coiled-coil conformation; the sequence is LEEIQDLDKVNKKKKALELRKSAIDEKK. Residues 976–1094 form the C2 4 domain; the sequence is PIDTKQLPAN…KVEGTTELDV (119 aa). Serine 1000 carries the post-translational modification Phosphoserine. Positions 1008, 1014, 1064, 1066, 1069, and 1072 each coordinate Ca(2+).

The protein belongs to the tricalbin family. In terms of assembly, interacts with TCB2 via its C-terminal domain. Requires Ca(2+) as cofactor.

The protein resides in the cell membrane. It is found in the endoplasmic reticulum membrane. Its function is as follows. May play a role in membrane trafficking. The sequence is that of Tricalbin-1 (TCB1) from Saccharomyces cerevisiae (strain ATCC 204508 / S288c) (Baker's yeast).